A 1047-amino-acid polypeptide reads, in one-letter code: uncharacterized protein (1047 aa).

An N6-acetyllysine modification is found at Lys-17. Disordered stretches follow at residues 172–208 and 236–283; these read PPCS…GSFS and RNSK…PQAL. At Ser-208 the chain carries Phosphoserine. The segment covering 237-254 has biased composition (polar residues); sequence NSKQAMSEGPSSPWTQLA. Pro residues predominate over residues 268-283; sequence HYPPPHHPPPHPPQAL. Phosphoserine is present on residues Ser-299 and Ser-391. Phosphothreonine is present on Thr-397. Disordered stretches follow at residues 448-469, 482-504, 519-567, 668-690, 714-763, 931-1004, and 1021-1047; these read EKLQ…DSPV, ECQS…PVID, PAPE…LRGS, PSTP…GPIG, VAVA…GDSL, EAGA…TLKA, and PTWG…SHHL. Ser-455, Ser-496, and Ser-497 each carry phosphoserine. 2 stretches are compositionally biased toward low complexity: residues 729–741 and 751–762; these read PARA…ARDP and PAPASTSAPGDS. Phosphoserine occurs at positions 936, 956, 988, and 996. Residues 978 to 996 are compositionally biased toward low complexity; the sequence is AAAGEESCGASPTPATSAS.

This is an uncharacterized protein from Homo sapiens (Human).